Consider the following 160-residue polypeptide: Cytochrome b6-f complex subunit 4 (160 aa).

The next 3 membrane-spanning stretches (helical) occupy residues 36 to 56, 95 to 115, and 131 to 151; these read LLYIFPVVIFGTIACNVGLAV, LLGVLLMAAVPAGLLTVPFLE, and TVFLIGTVVSIWLGIGAAMPI.

The protein belongs to the cytochrome b family. PetD subfamily. The 4 large subunits of the cytochrome b6-f complex are cytochrome b6, subunit IV (17 kDa polypeptide, petD), cytochrome f and the Rieske protein, while the 4 small subunits are petG, petL, petM and petN. The complex functions as a dimer.

It localises to the plastid. It is found in the chloroplast thylakoid membrane. Component of the cytochrome b6-f complex, which mediates electron transfer between photosystem II (PSII) and photosystem I (PSI), cyclic electron flow around PSI, and state transitions. This chain is Cytochrome b6-f complex subunit 4, found in Zygnema circumcarinatum (Green alga).